Consider the following 320-residue polypeptide: Phosphatidylserine decarboxylase proenzyme (320 aa).

Catalysis depends on charge relay system; for autoendoproteolytic cleavage activity residues D90, H147, and S254. The active-site Schiff-base intermediate with substrate; via pyruvic acid; for decarboxylase activity is the S254. Position 254 is a pyruvic acid (Ser); by autocatalysis (S254). The disordered stretch occupies residues 290-320 (TAAAEPAPLPEEEIRAEHRASPLVDDKQDQG). The segment covering 301–320 (EEIRAEHRASPLVDDKQDQG) has biased composition (basic and acidic residues).

It belongs to the phosphatidylserine decarboxylase family. PSD-B subfamily. Prokaryotic type I sub-subfamily. As to quaternary structure, heterodimer of a large membrane-associated beta subunit and a small pyruvoyl-containing alpha subunit. The cofactor is pyruvate. In terms of processing, is synthesized initially as an inactive proenzyme. Formation of the active enzyme involves a self-maturation process in which the active site pyruvoyl group is generated from an internal serine residue via an autocatalytic post-translational modification. Two non-identical subunits are generated from the proenzyme in this reaction, and the pyruvate is formed at the N-terminus of the alpha chain, which is derived from the carboxyl end of the proenzyme. The autoendoproteolytic cleavage occurs by a canonical serine protease mechanism, in which the side chain hydroxyl group of the serine supplies its oxygen atom to form the C-terminus of the beta chain, while the remainder of the serine residue undergoes an oxidative deamination to produce ammonia and the pyruvoyl prosthetic group on the alpha chain. During this reaction, the Ser that is part of the protease active site of the proenzyme becomes the pyruvoyl prosthetic group, which constitutes an essential element of the active site of the mature decarboxylase.

It is found in the cell membrane. It carries out the reaction a 1,2-diacyl-sn-glycero-3-phospho-L-serine + H(+) = a 1,2-diacyl-sn-glycero-3-phosphoethanolamine + CO2. The protein operates within phospholipid metabolism; phosphatidylethanolamine biosynthesis; phosphatidylethanolamine from CDP-diacylglycerol: step 2/2. Functionally, catalyzes the formation of phosphatidylethanolamine (PtdEtn) from phosphatidylserine (PtdSer). The sequence is that of Phosphatidylserine decarboxylase proenzyme from Klebsiella pneumoniae subsp. pneumoniae (strain ATCC 700721 / MGH 78578).